We begin with the raw amino-acid sequence, 452 residues long: Translation initiation factor eIF2B subunit gamma (452 aa).

Methionine 1 is subject to N-acetylmethionine. Serine 261 is subject to Phosphoserine.

It belongs to the eIF-2B gamma/epsilon subunits family. As to quaternary structure, component of the translation initiation factor 2B (eIF2B) complex which is a heterodecamer of two sets of five different subunits: alpha, beta, gamma, delta and epsilon. Subunits alpha, beta and delta comprise a regulatory subcomplex and subunits epsilon and gamma comprise a catalytic subcomplex. Within the complex, the hexameric regulatory complex resides at the center, with the two heterodimeric catalytic subcomplexes bound on opposite sides.

It localises to the cytoplasm. It is found in the cytosol. With respect to regulation, activated by the chemical integrated stress response (ISR) inhibitor ISRIB which stimulates guanine nucleotide exchange factor activity for both phosphorylated and unphosphorylated eIF2. Functionally, acts as a component of the translation initiation factor 2B (eIF2B) complex, which catalyzes the exchange of GDP for GTP on the eukaryotic initiation factor 2 (eIF2) complex gamma subunit. Its guanine nucleotide exchange factor activity is repressed when bound to eIF2 complex phosphorylated on the alpha subunit, thereby limiting the amount of methionyl-initiator methionine tRNA available to the ribosome and consequently global translation is repressed. The sequence is that of Translation initiation factor eIF2B subunit gamma (EIF2B3) from Bos taurus (Bovine).